We begin with the raw amino-acid sequence, 169 residues long: uncharacterized protein (169 aa).

The protein localises to the mitochondrion. This is an uncharacterized protein from Marchantia polymorpha (Common liverwort).